A 226-amino-acid polypeptide reads, in one-letter code: Urease accessory protein UreF (226 aa).

This sequence belongs to the UreF family. In terms of assembly, ureD, UreF and UreG form a complex that acts as a GTP-hydrolysis-dependent molecular chaperone, activating the urease apoprotein by helping to assemble the nickel containing metallocenter of UreC. The UreE protein probably delivers the nickel.

The protein resides in the cytoplasm. Its function is as follows. Required for maturation of urease via the functional incorporation of the urease nickel metallocenter. This Burkholderia mallei (strain NCTC 10247) protein is Urease accessory protein UreF.